Reading from the N-terminus, the 208-residue chain is MEFSMKFNATARSVQGSSASRRLRRAGRVPAIVYGGTAAPLNIELDHNEIYHALRKEEFHALILNMVIEGGKTEEVLLRSVQWHAYKPQVMHVDFQRVEANQALHTKVPLHFINAEVSPAVKLSGAIISHVLTELDITCLPALLPQFIEVNLGDLLGGGSIHLADIKLPKGVTFNAHGGDTNPLIAAAVVKGGGAADEGDAAAEQPAA.

Belongs to the bacterial ribosomal protein bL25 family. CTC subfamily. Part of the 50S ribosomal subunit; part of the 5S rRNA/L5/L18/L25 subcomplex. Contacts the 5S rRNA. Binds to the 5S rRNA independently of L5 and L18.

Its function is as follows. This is one of the proteins that binds to the 5S RNA in the ribosome where it forms part of the central protuberance. This is Large ribosomal subunit protein bL25 from Bordetella pertussis (strain Tohama I / ATCC BAA-589 / NCTC 13251).